A 323-amino-acid polypeptide reads, in one-letter code: Aldo-keto reductase family 1 member C4 (323 aa).

Residues 20 to 24 (GFGTY) and D50 contribute to the NADP(+) site. Y55 serves as the catalytic Proton donor. H117 contributes to the substrate binding site. Residues 166-167 (SN), Q190, 216-221 (HSALGT), and 270-280 (KSYNEQRIREN) each bind NADP(+).

The protein belongs to the aldo/keto reductase family. In terms of assembly, monomer.

It localises to the cytoplasm. The protein localises to the cytosol. It carries out the reaction chlordecone alcohol + NADP(+) = chlordecone + NADPH + H(+). The catalysed reaction is a 3alpha-hydroxysteroid + NADP(+) = a 3-oxosteroid + NADPH + H(+). It catalyses the reaction a 3alpha-hydroxysteroid + NAD(+) = a 3-oxosteroid + NADH + H(+). The enzyme catalyses 5alpha-androstane-3alpha,17beta-diol + NADP(+) = 17beta-hydroxy-5alpha-androstan-3-one + NADPH + H(+). It carries out the reaction 5alpha-androstane-3beta,17beta-diol + NADP(+) = 17beta-hydroxy-5alpha-androstan-3-one + NADPH + H(+). The catalysed reaction is 5alpha-androstane-3alpha,17beta-diol + NAD(+) = 17beta-hydroxy-5alpha-androstan-3-one + NADH + H(+). It catalyses the reaction 17beta-estradiol + NADP(+) = estrone + NADPH + H(+). The enzyme catalyses 17beta-estradiol + NAD(+) = estrone + NADH + H(+). It carries out the reaction (20S)-hydroxypregn-4-en-3-one + NADP(+) = progesterone + NADPH + H(+). The catalysed reaction is (20S)-hydroxypregn-4-en-3-one + NAD(+) = progesterone + NADH + H(+). It catalyses the reaction androsterone + NADP(+) = 5alpha-androstan-3,17-dione + NADPH + H(+). The enzyme catalyses testosterone + NADP(+) = androst-4-ene-3,17-dione + NADPH + H(+). It carries out the reaction testosterone + NAD(+) = androst-4-ene-3,17-dione + NADH + H(+). The catalysed reaction is 3alpha-hydroxy-5alpha-androstane 17-O-(beta-D-glucuronate) + NADP(+) = 5alpha-dihydrotestosterone 17-O-(beta-D-glucuronate) + NADPH + H(+). It catalyses the reaction (3beta,5alpha,17beta)-3-hydroxy-androstan-17-yl sulfate + NADP(+) = 5alpha-dihydrotestosterone sulfate + NADPH + H(+). The enzyme catalyses 5alpha-androstane-3alpha,17beta-diol + NAD(+) = androsterone + NADH + H(+). It participates in steroid metabolism. Its function is as follows. Cytosolic aldo-keto reductase that catalyzes the NADH and NADPH-dependent reduction of ketosteroids to hydroxysteroids. Liver specific enzyme that acts as an NAD(P)(H)-dependent 3-, 17- and 20-ketosteroid reductase on the steroid nucleus and side chain. Displays the ability to catalyze both oxidation and reduction in vitro, but most probably acts as a reductase in vivo since the oxidase activity measured in vitro is inhibited by physiological concentration of NADPH. Acts preferentially as a 3-alpha-hydroxysteroid dehydrogenase (HSD) with a subsidiary 3-beta-HSD activity. Catalyzes efficiently the transformation of the potent androgen 5-alpha-dihydrotestosterone (5alpha-DHT or 17beta-hydroxy-5alpha-androstan-3-one) into the less active form, 5-alpha-androstan-3-alpha,17-beta-diol (3-alpha-diol). Catalyzes the reduction of estrone into 17beta-estradiol but with low efficiency. Metabolizes a broad spectrum of natural and synthetic therapeutic steroid and plays an important role in metabolism of androgens, estrogens, progestereone and conjugated steroids. Catalyzes the biotransformation of the pesticide chlordecone (kepone) to its corresponding alcohol leading to increased biliary excretion of the pesticide and concomitant reduction of its neurotoxicity since bile is the major excretory route. The polypeptide is Aldo-keto reductase family 1 member C4 (AKR1C4) (Macaca fascicularis (Crab-eating macaque)).